The chain runs to 1375 residues: Protein lingerer (1375 aa).

A disordered region spans residues 1–69 (MSTQTRSGGG…KAQPKATTEQ (69 aa)). Positions 53 to 62 (SKTDKPEKAQ) are enriched in basic and acidic residues. Positions 84–124 (QINEKVLLLLTMTQRSEEEVCCALNECDYDLEAAANFLIEE) constitute a UBA domain. Low complexity-rich tracts occupy residues 142–161 (ANNT…GNGN) and 173–184 (SNRGGTRGSSDS). The tract at residues 142-286 (ANNTADGAAG…GSGRGGNANE (145 aa)) is disordered. Residues 185–204 (RGWRGRETRENERNQRESRE) are compositionally biased toward basic and acidic residues. The segment covering 228–282 (RNGGGRSGPGGGGRGGGFVSRSGRGGGRMGGRTGGPRGDRGSGGPGGAYGSGRGG) has biased composition (gly residues). The residue at position 321 (Tyr321) is a Phosphotyrosine. Ser324 carries the phosphoserine modification. Composition is skewed to polar residues over residues 374–387 (VQQG…SSSG) and 395–412 (ATLS…SAAV). Disordered stretches follow at residues 374–453 (VQQG…ASPD) and 613–646 (FEPL…QQQQ). Positions 426–441 (SGAGTGASAAAGGGAG) are enriched in gly residues. Low complexity-rich tracts occupy residues 442–453 (STPSSFVSASPD) and 629–646 (QQQQ…QQQQ). Ser672 is modified (phosphoserine). Thr673 carries the phosphothreonine modification. Ser674 is modified (phosphoserine). Low complexity predominate over residues 750-767 (QGYGSYQPSSYQQQAGSG). Disordered regions lie at residues 750–801 (QGYG…SGNA), 869–894 (SVST…GQTG), 987–1036 (KNTS…GGSG), 1203–1234 (SKGG…DLTS), and 1251–1277 (EKQS…TSAQ). Gly residues predominate over residues 768-781 (AQSGTGAVSGGGGT). Low complexity-rich tracts occupy residues 789–801 (GGSS…SGNA), 869–882 (SVST…NSGS), and 987–1008 (KNTS…TGNA). Positions 1009 to 1036 (SGQGAGASTGGVGSSSGAGGAGSGGGSG) are enriched in gly residues. Residues 1265 to 1277 (MPNTQTAGGTSAQ) are compositionally biased toward polar residues.

In terms of tissue distribution, at stage 11, expression is restricted to the neuroblasts, predominant in the central nervous system (CNS), including the brain and ventral nerve cord, and in the PNS. Later embryonic expression is seen in the gonads. Late third instar larvae show expression in the CNS, imaginal disks (including genital, eye-antennal, leg, wing and haltere disks), and gonads. In the larval brain, it is expressed in all of the glial cells and in clusters of neurons that projected contralaterally. In the larval ventral ganglion, it is expressed in subperineurial glia, peripheral exit glia, and a number of interneurons, but not in motor neurons. Isoform B is abundantly expressed in males and females. Isoform D is male specific and expressed at low levels.

The protein localises to the cytoplasm. Functionally, acts in the nervous system to mediate the control of copulatory organs during courtship. The sequence is that of Protein lingerer from Drosophila melanogaster (Fruit fly).